We begin with the raw amino-acid sequence, 376 residues long: N-acetyldiaminopimelate deacetylase (376 aa).

Residue Asp69 is part of the active site. Glu128 (proton acceptor) is an active-site residue.

Belongs to the peptidase M20A family. N-acetyldiaminopimelate deacetylase subfamily.

The catalysed reaction is N-acetyl-(2S,6S)-2,6-diaminopimelate + H2O = (2S,6S)-2,6-diaminopimelate + acetate. It participates in amino-acid biosynthesis; L-lysine biosynthesis via DAP pathway; LL-2,6-diaminopimelate from (S)-tetrahydrodipicolinate (acetylase route): step 3/3. Catalyzes the conversion of N-acetyl-diaminopimelate to diaminopimelate and acetate. The sequence is that of N-acetyldiaminopimelate deacetylase from Bacillus cereus (strain B4264).